The primary structure comprises 202 residues: MENLQVNQREKKTRHSSRQCRRKGLVPGVIYGKGINNFLFEIGELELNHALSVTGEHGLLSINSQEGSLNTLIKEVQRDPVTRRVLHIDLEKVEGNEEIETAVPINYVGEEYINKLDAVLQKNLDSIKVKCSPSNIPKGVNLNVGRAKPGDQFKIADVEFGNEITVVDDLNSIVASVSYDQKIITQEVVDQEVAENRAKKES.

This sequence belongs to the bacterial ribosomal protein bL25 family. CTC subfamily. In terms of assembly, part of the 50S ribosomal subunit; part of the 5S rRNA/L5/L18/L25 subcomplex. Contacts the 5S rRNA. Binds to the 5S rRNA independently of L5 and L18.

Its function is as follows. This is one of the proteins that binds to the 5S RNA in the ribosome where it forms part of the central protuberance. The chain is Large ribosomal subunit protein bL25 from Clostridium perfringens (strain ATCC 13124 / DSM 756 / JCM 1290 / NCIMB 6125 / NCTC 8237 / Type A).